Reading from the N-terminus, the 418-residue chain is Pentatricopeptide repeat-containing protein At2g18520, mitochondrial (418 aa).

Residues 1–14 (MTSSRLYLRFLRRF) constitute a mitochondrion transit peptide. PPR repeat units lie at residues 101 to 135 (TETF…GTPR), 136 to 166 (TVVS…FPQR), 173 to 207 (DKIS…GVEV), 208 to 242 (TIIA…GCDL), 243 to 276 (DNTV…GLKP), 277 to 311 (DTVS…NAAT), 312 to 342 (FRTL…HKIP), and 343 to 373 (DFKT…VKKK).

This sequence belongs to the PPR family. P subfamily.

The protein localises to the mitochondrion. The chain is Pentatricopeptide repeat-containing protein At2g18520, mitochondrial from Arabidopsis thaliana (Mouse-ear cress).